The chain runs to 137 residues: Large ribosomal subunit protein uL16 (137 aa).

It belongs to the universal ribosomal protein uL16 family. In terms of assembly, part of the 50S ribosomal subunit.

Binds 23S rRNA and is also seen to make contacts with the A and possibly P site tRNAs. The chain is Large ribosomal subunit protein uL16 from Lactococcus lactis subsp. cremoris (strain SK11).